The chain runs to 79 residues: Short neurotoxin 3 (79 aa).

An N-terminal signal peptide occupies residues 1 to 23; that stretch reads MKTLLLTLVVMTIVCLDLGYTLT. Cystine bridges form between C24–C41, C34–C59, C63–C71, and C72–C77.

This sequence belongs to the three-finger toxin family. Short-chain subfamily. As to expression, expressed by the venom gland.

It is found in the secreted. This chain is Short neurotoxin 3, found in Oxyuranus scutellatus scutellatus (Australian taipan).